The chain runs to 163 residues: Protein VASCULATURE COMPLEXITY AND CONNECTIVITY (163 aa).

The signal sequence occupies residues 1–27 (MTKIGGILVCLVIVGLDVAAAILGIQA). The next 3 helical transmembrane spans lie at 54-74 (LGLG…LVGG), 95-115 (MACL…IVIG), and 133-153 (FLSI…AYYV).

Belongs to the DESIGUAL family. Interacts with OPS. Expressed in vascular cells, mostly in hypocotyls, and, to a lower extent, in seedlings, roots, flowers, siliques, developing leaves and inflorescences, but barely in mature leaves and seeds. High levels in leaf primordia.

The protein localises to the endoplasmic reticulum membrane. In terms of biological role, required, together with OPS, for embryo provasculature development and cotyledon vascular complexity and connectivity. Necessary, partially redundantly with DEAL2 and DEAL3, to ensure bilateral symmetry development and early leaf margin patterning, probably via the regulation of auxin and CUC2 distribution. Regulates cell proliferation but not cell expansion. This chain is Protein VASCULATURE COMPLEXITY AND CONNECTIVITY, found in Arabidopsis thaliana (Mouse-ear cress).